A 503-amino-acid chain; its full sequence is MLEKFVDSLWKFCRKSKFQYMTPVADAVDSFCFEPLHTPSSPPFVRDAVDVKRWMMLVVIALMPTVFVAIWNSGLQALVYQSSDPQIMEAFLHISGFTSYFSFVSKEIGIASVLFAGCKIFLPLLFISYAVGGTCEVLFAIIRKHKIAEGLLVTGMLYPLILPPTIPYWMAALGIAFGVVIGKELFGGTGMNILNPALTGRAFLFFTFPAKMSGDVWVGSNPSKIKESLAMMNSLAERSNFDGFSQSTCLQILNSTPPSVKRVHIDAIASNILKLEHVPSQEVLQSQFSTWAESFPGLTVDQLSLDQLQNFVTSPTAEGGLGLLPAHFDAAYSLTDAIYGIGKFSTGNLFFGNIVGSLGETSTVACLLGAGLLLLTGIASWRTMLSFGLSSLFFAWLFKIISILAAGQSGAWAPAKFFIPVYRHLFIGGLAFGLVFMATDPVTSPATKLAKWFYGAFIGFLTILIRLINPAYPEGVMLAILLGNVFAPSFDRIALKQYRQRRV.

The next 5 helical transmembrane spans lie at 55–75, 85–105, 120–142, 161–181, and 186–206; these read MMLVVIALMPTVFVAIWNSGL, PQIMEAFLHISGFTSYFSFVS, IFLPLLFISYAVGGTCEVLFAII, ILPPTIPYWMAALGIAFGVVI, and FGGTGMNILNPALTGRAFLFF. Thr-248 is subject to FMN phosphoryl threonine. 5 helical membrane-spanning segments follow: residues 361–381, 387–407, 417–437, 452–472, and 475–495; these read TSTVACLLGAGLLLLTGIASW, FGLSSLFFAWLFKIISILAAG, FFIPVYRHLFIGGLAFGLVFM, WFYGAFIGFLTILIRLINPAY, and GVMLAILLGNVFAPSFDRIAL.

The protein belongs to the NqrB/RnfD family. In terms of assembly, composed of six subunits; NqrA, NqrB, NqrC, NqrD, NqrE and NqrF. FMN is required as a cofactor.

The protein resides in the cell inner membrane. The enzyme catalyses a ubiquinone + n Na(+)(in) + NADH + H(+) = a ubiquinol + n Na(+)(out) + NAD(+). Its function is as follows. NQR complex catalyzes the reduction of ubiquinone-1 to ubiquinol by two successive reactions, coupled with the transport of Na(+) ions from the cytoplasm to the periplasm. NqrA to NqrE are probably involved in the second step, the conversion of ubisemiquinone to ubiquinol. The sequence is that of Na(+)-translocating NADH-quinone reductase subunit B from Chlamydia muridarum (strain MoPn / Nigg).